A 111-amino-acid chain; its full sequence is Ribosome-binding factor A (111 aa).

This sequence belongs to the RbfA family. Monomer. Binds 30S ribosomal subunits, but not 50S ribosomal subunits or 70S ribosomes.

The protein localises to the cytoplasm. Functionally, one of several proteins that assist in the late maturation steps of the functional core of the 30S ribosomal subunit. Associates with free 30S ribosomal subunits (but not with 30S subunits that are part of 70S ribosomes or polysomes). Required for efficient processing of 16S rRNA. May interact with the 5'-terminal helix region of 16S rRNA. The chain is Ribosome-binding factor A from Helicobacter acinonychis (strain Sheeba).